A 449-amino-acid polypeptide reads, in one-letter code: Neuraminidase (449 aa).

Topologically, residues 1-6 are intravirion; the sequence is MNPNQK. The chain crosses the membrane as a helical span at residues 7 to 27; it reads IIAIGSICMVIGIVSLMLQIG. Residues 11–33 are involved in apical transport and lipid raft association; sequence GSICMVIGIVSLMLQIGNMISIW. Topologically, residues 28-449 are virion surface; the sequence is NMISIWISHS…GAELPFTIDK (422 aa). The interval 36–70 is hypervariable stalk region; the sequence is HSIQTGNQRQAEPISNTKVLNEKAVASVTLAGNSS. Asn-68 carries N-linked (GlcNAc...) asparagine; by host glycosylation. The segment at 71 to 449 is head of neuraminidase; that stretch reads LCPISGWAVH…GAELPFTIDK (379 aa). Cystine bridges form between Cys-72–Cys-397, Cys-104–Cys-109, Cys-164–Cys-211, Cys-213–Cys-218, Cys-259–Cys-272, Cys-261–Cys-270, Cys-298–Cys-315, and Cys-401–Cys-426. Arg-98 is a binding site for substrate. The N-linked (GlcNAc...) asparagine; by host glycan is linked to Asn-126. Catalysis depends on Asp-131, which acts as the Proton donor/acceptor. Arg-132 serves as a coordination point for substrate. An N-linked (GlcNAc...) asparagine; by host glycan is attached at Asn-215. 257-258 contacts substrate; that stretch reads EE. Arg-273 contacts substrate. Asp-274, Gly-278, and Asp-304 together coordinate Ca(2+). Arg-348 is a substrate binding site. Tyr-382 serves as the catalytic Nucleophile.

Belongs to the glycosyl hydrolase 34 family. In terms of assembly, homotetramer. It depends on Ca(2+) as a cofactor. Post-translationally, N-glycosylated.

It is found in the virion membrane. It localises to the host apical cell membrane. It catalyses the reaction Hydrolysis of alpha-(2-&gt;3)-, alpha-(2-&gt;6)-, alpha-(2-&gt;8)- glycosidic linkages of terminal sialic acid residues in oligosaccharides, glycoproteins, glycolipids, colominic acid and synthetic substrates.. With respect to regulation, inhibited by the neuraminidase inhibitors zanamivir (Relenza) and oseltamivir (Tamiflu). These drugs interfere with the release of progeny virus from infected cells and are effective against all influenza strains. Resistance to neuraminidase inhibitors is quite rare. Catalyzes the removal of terminal sialic acid residues from viral and cellular glycoconjugates. Cleaves off the terminal sialic acids on the glycosylated HA during virus budding to facilitate virus release. Additionally helps virus spread through the circulation by further removing sialic acids from the cell surface. These cleavages prevent self-aggregation and ensure the efficient spread of the progeny virus from cell to cell. Otherwise, infection would be limited to one round of replication. Described as a receptor-destroying enzyme because it cleaves a terminal sialic acid from the cellular receptors. May facilitate viral invasion of the upper airways by cleaving the sialic acid moieties on the mucin of the airway epithelial cells. Likely to plays a role in the budding process through its association with lipid rafts during intracellular transport. May additionally display a raft-association independent effect on budding. Plays a role in the determination of host range restriction on replication and virulence. Sialidase activity in late endosome/lysosome traffic seems to enhance virus replication. This Aves (Cat) protein is Neuraminidase.